The chain runs to 310 residues: Ribose-phosphate pyrophosphokinase (310 aa).

Residues 34–36 and 93–94 each bind ATP; these read DGE and RQ. Mg(2+)-binding residues include His127 and Asp167. Lys190 is an active-site residue. Residues Arg192, Asp216, and 220-224 contribute to the D-ribose 5-phosphate site; that span reads DSGGT.

The protein belongs to the ribose-phosphate pyrophosphokinase family. Class I subfamily. As to quaternary structure, homohexamer. It depends on Mg(2+) as a cofactor.

It is found in the cytoplasm. The enzyme catalyses D-ribose 5-phosphate + ATP = 5-phospho-alpha-D-ribose 1-diphosphate + AMP + H(+). The protein operates within metabolic intermediate biosynthesis; 5-phospho-alpha-D-ribose 1-diphosphate biosynthesis; 5-phospho-alpha-D-ribose 1-diphosphate from D-ribose 5-phosphate (route I): step 1/1. Its function is as follows. Involved in the biosynthesis of the central metabolite phospho-alpha-D-ribosyl-1-pyrophosphate (PRPP) via the transfer of pyrophosphoryl group from ATP to 1-hydroxyl of ribose-5-phosphate (Rib-5-P). This Maricaulis maris (strain MCS10) (Caulobacter maris) protein is Ribose-phosphate pyrophosphokinase.